We begin with the raw amino-acid sequence, 413 residues long: Multifunctional CCA protein (413 aa).

Residues Gly-8 and Arg-11 each contribute to the ATP site. Residues Gly-8 and Arg-11 each contribute to the CTP site. Mg(2+) contacts are provided by Asp-21 and Asp-23. Positions 91, 137, and 140 each coordinate ATP. CTP-binding residues include Arg-91, Arg-137, and Arg-140. Residues Thr-228–Trp-329 enclose the HD domain.

Belongs to the tRNA nucleotidyltransferase/poly(A) polymerase family. Bacterial CCA-adding enzyme type 1 subfamily. In terms of assembly, monomer. Can also form homodimers and oligomers. The cofactor is Mg(2+). Ni(2+) is required as a cofactor.

The enzyme catalyses a tRNA precursor + 2 CTP + ATP = a tRNA with a 3' CCA end + 3 diphosphate. The catalysed reaction is a tRNA with a 3' CCA end + 2 CTP + ATP = a tRNA with a 3' CCACCA end + 3 diphosphate. In terms of biological role, catalyzes the addition and repair of the essential 3'-terminal CCA sequence in tRNAs without using a nucleic acid template. Adds these three nucleotides in the order of C, C, and A to the tRNA nucleotide-73, using CTP and ATP as substrates and producing inorganic pyrophosphate. tRNA 3'-terminal CCA addition is required both for tRNA processing and repair. Also involved in tRNA surveillance by mediating tandem CCA addition to generate a CCACCA at the 3' terminus of unstable tRNAs. While stable tRNAs receive only 3'-terminal CCA, unstable tRNAs are marked with CCACCA and rapidly degraded. The protein is Multifunctional CCA protein of Shewanella loihica (strain ATCC BAA-1088 / PV-4).